The sequence spans 413 residues: Glucose-1-phosphatase (413 aa).

Residues 1-22 form the signal peptide; that stretch reads MKKSLLAVAVAGAVLLSSAVQA. R39 lines the substrate pocket. The active-site Nucleophile is H40. The substrate site is built by R43, R116, and E218. D312 (proton donor) is an active-site residue.

This sequence belongs to the histidine acid phosphatase family. Homodimer.

The protein resides in the periplasm. It catalyses the reaction alpha-D-glucose 1-phosphate + H2O = D-glucose + phosphate. The sequence is that of Glucose-1-phosphatase (agp) from Salmonella typhimurium (strain LT2 / SGSC1412 / ATCC 700720).